Reading from the N-terminus, the 709-residue chain is Solute carrier family 15 member 1 (709 aa).

Residues 1–21 (MGMSKSRGCFGYPLSIFFIVV) form a helical membrane-spanning segment. Residues 22–53 (NEFCERFSYYGMRALLVLYFRNFLGWDDNLST) lie on the Extracellular side of the membrane. An N-linked (GlcNAc...) asparagine glycan is attached at Asn50. Residues 54–74 (AIYHTFVALCYLTPILGALIA) form a helical membrane-spanning segment. Residues 75 to 82 (DSWLGKFK) lie on the Cytoplasmic side of the membrane. A helical membrane pass occupies residues 83 to 103 (TIVSLSIVYTIGQAVISVSSI). Residues 104–118 (NDLTDHDHNGSPDSL) lie on the Extracellular side of the membrane. Residues 119 to 139 (PVHVALSMVGLALIALGTGGI) traverse the membrane as a helical segment. Residues 140 to 161 (KPCVSAFGGDQFEEGQEKQRNR) are Cytoplasmic-facing. Residues 162–182 (FFSIFYLAINGGSLLSTIITP) traverse the membrane as a helical segment. Topologically, residues 183-198 (ILRVQQCGIHSQQACY) are extracellular. The helical transmembrane segment at 199-219 (PLAFGVPAALMAVALIVFVLG) threads the bilayer. The Cytoplasmic segment spans residues 220-276 (SGMYKKFQPQGNIMGKVAKCIGFAIKNRFRHRSKAYPKREHWLDWAKEKYDERLISQ). The chain crosses the membrane as a helical span at residues 277–297 (IKMVTKVMFLYIPLPMFWALF). Residues 298-327 (DQQGSRWTLQATTMNGKIGAIEIQPDQMQT) lie on the Extracellular side of the membrane. Residues 328–348 (VNAILIVIMVPIVDAVVYPLI) traverse the membrane as a helical segment. The Cytoplasmic segment spans residues 349 to 361 (AKCGFNFTSLKKM). The helical transmembrane segment at 362–382 (TVGMFLASMAFVVAAIVQVEI) threads the bilayer. Residues 383–585 (DKTLPVFPGG…PPNTVNMALQ (203 aa)) lie on the Extracellular side of the membrane. The segment at 383–585 (DKTLPVFPGG…PPNTVNMALQ (203 aa)) is extracellular domain (ECD). Residues Asn406, Asn439, Asn515, and Asn532 are each glycosylated (N-linked (GlcNAc...) asparagine). The helical transmembrane segment at 586 to 606 (IPQYFLLTCGEVVFSVTGLEF) threads the bilayer. Residues 607–620 (SYSQAPSNMKSVLQ) are Cytoplasmic-facing. A helical membrane pass occupies residues 621 to 641 (AGWLLTVAVGNIIVLIVAGAG). The Extracellular segment spans residues 642 to 646 (HFPKQ). Residues 647-667 (WAEYILFASLLLVVCVIFAIM) traverse the membrane as a helical segment. Over 668–709 (ARFYTYINPAEIEAQFDEDEKKKGIGKENPYSSLEPVSQTNM) the chain is Cytoplasmic. The tract at residues 690 to 709 (KGIGKENPYSSLEPVSQTNM) is disordered. The span at 697–709 (PYSSLEPVSQTNM) shows a compositional bias: polar residues.

It belongs to the major facilitator superfamily. Proton-dependent oligopeptide transporter (POT/PTR) (TC 2.A.17) family. Interacts (via extracellular domain region) with trypsin.

The protein resides in the apical cell membrane. The enzyme catalyses a dipeptide(out) + H(+)(out) = a dipeptide(in) + H(+)(in). It catalyses the reaction an L-amino acid tripeptide(out) + H(+)(out) = an L-amino acid tripeptide(in) + H(+)(in). It carries out the reaction L-alanyl-L-lysine(out) + H(+)(out) = L-alanyl-L-lysine(in) + H(+)(in). The catalysed reaction is L-alanyl-L-proline(out) + H(+)(out) = L-alanyl-L-proline(in) + H(+)(in). The enzyme catalyses L-alanyl-L-valine(out) + H(+)(out) = L-alanyl-L-valine(in) + H(+)(in). It catalyses the reaction carnosine(out) + H(+)(out) = carnosine(in) + H(+)(in). It carries out the reaction glycyl-L-glutamine(out) + H(+)(out) = glycyl-L-glutamine(in) + H(+)(in). The catalysed reaction is glycyl-L-leucine(out) + H(+)(out) = glycyl-L-leucine(in) + H(+)(in). The enzyme catalyses glycyl-L-proline(out) + H(+)(out) = glycyl-L-proline(in) + H(+)(in). It catalyses the reaction glycyl-sarcosine(out) + H(+)(out) = glycyl-sarcosine(in) + H(+)(in). It carries out the reaction L-leucyl-L-leucine(out) + H(+)(out) = L-leucyl-L-leucine(in) + H(+)(in). The catalysed reaction is L-leucyl-L-proline(out) + H(+)(out) = L-leucyl-L-proline(in) + H(+)(in). The enzyme catalyses L-phenylalanyl-L-leucine(out) + H(+)(out) = L-phenylalanyl-L-leucine(in) + H(+)(in). It catalyses the reaction L-phenylalanyl-L-phenylalanine(out) + H(+)(out) = L-phenylalanyl-L-phenylalanine(in) + H(+)(in). It carries out the reaction L-lysyl-glycine(out) + H(+)(out) = L-lysyl-glycine(in) + H(+)(in). The catalysed reaction is L-tyrosylglycine(out) + H(+)(out) = L-tyrosylglycine(in) + H(+)(in). The enzyme catalyses L-alanyl-L-aspartate(out) + 2 H(+)(out) = L-alanyl-L-aspartate(in) + 2 H(+)(in). It catalyses the reaction L-aspartyl-glycine(out) + 2 H(+)(out) = L-aspartyl-glycine(in) + 2 H(+)(in). It carries out the reaction glycyl-L-aspartate(out) + 2 H(+)(out) = glycyl-L-aspartate(in) + 2 H(+)(in). The catalysed reaction is glycyl-L-glutamate(out) + 2 H(+)(out) = glycyl-L-glutamate(in) + 2 H(+)(in). The enzyme catalyses L-alanyl-L-leucyl-L-alanine(out) + H(+)(out) = L-alanyl-L-leucyl-L-alanine(in) + H(+)(in). It catalyses the reaction L-alanyl-L-prolylglycine(out) + H(+)(out) = L-alanyl-L-prolylglycine(in) + H(+)(in). It carries out the reaction glycylglycyl-L-isoleucine(out) + H(+)(out) = glycylglycyl-L-isoleucine(in) + H(+)(in). The catalysed reaction is glycylglycyl-L-proline(out) + H(+)(out) = glycylglycyl-L-proline(in) + H(+)(in). The enzyme catalyses L-methionyl-L-phenylalanyl-L-methionine(out) + H(+)(out) = L-methionyl-L-phenylalanyl-L-methionine(in) + H(+)(in). It catalyses the reaction N-acetyl-D-muramoyl-L-alanyl-D-isoglutamine(out) + 2 H(+)(out) = N-acetyl-D-muramoyl-L-alanyl-D-isoglutamine(in) + 2 H(+)(in). It carries out the reaction N(alpha)-formyl-L-methionyl-L-leucyl-L-phenylalanine(out) + 2 H(+)(out) = N(alpha)-formyl-L-methionyl-L-leucyl-L-phenylalanine(in) + 2 H(+)(in). Its function is as follows. Electrogenic proton-coupled amino-acid transporter that transports oligopeptides of 2 to 4 amino acids with a preference for dipeptides. Transports neutral and monovalently charged peptides with a proton to peptide stoichiometry of 1:1 or 2:1. Primarily responsible for the absorption of dietary di- and tripeptides from the small intestinal lumen. Mediates transepithelial transport of muramyl and N-formylated bacterial dipeptides contributing to recognition of pathogenic bacteria by the mucosal immune system. The polypeptide is Solute carrier family 15 member 1 (Mus musculus (Mouse)).